We begin with the raw amino-acid sequence, 457 residues long: Argininosuccinate lyase (457 aa).

The protein belongs to the lyase 1 family. Argininosuccinate lyase subfamily.

The protein localises to the cytoplasm. It carries out the reaction 2-(N(omega)-L-arginino)succinate = fumarate + L-arginine. It functions in the pathway amino-acid biosynthesis; L-arginine biosynthesis; L-arginine from L-ornithine and carbamoyl phosphate: step 3/3. The polypeptide is Argininosuccinate lyase (Shigella flexneri serotype 5b (strain 8401)).